A 212-amino-acid chain; its full sequence is Uridine kinase (212 aa).

Residue 13–20 (GASASGKS) participates in ATP binding.

The protein belongs to the uridine kinase family.

It is found in the cytoplasm. It catalyses the reaction uridine + ATP = UMP + ADP + H(+). The enzyme catalyses cytidine + ATP = CMP + ADP + H(+). The protein operates within pyrimidine metabolism; CTP biosynthesis via salvage pathway; CTP from cytidine: step 1/3. Its pathway is pyrimidine metabolism; UMP biosynthesis via salvage pathway; UMP from uridine: step 1/1. This chain is Uridine kinase, found in Shewanella denitrificans (strain OS217 / ATCC BAA-1090 / DSM 15013).